We begin with the raw amino-acid sequence, 86 residues long: Large ribosomal subunit protein bL27 (86 aa).

Residues 1-22 are disordered; sequence MAHKKAGGSSRNGRDSESKRLG.

This sequence belongs to the bacterial ribosomal protein bL27 family.

The sequence is that of Large ribosomal subunit protein bL27 from Acidithiobacillus ferrooxidans (strain ATCC 23270 / DSM 14882 / CIP 104768 / NCIMB 8455) (Ferrobacillus ferrooxidans (strain ATCC 23270)).